A 231-amino-acid chain; its full sequence is Cytidylate kinase (231 aa).

Gly18–Ser26 contributes to the ATP binding site.

Belongs to the cytidylate kinase family. Type 1 subfamily.

It is found in the cytoplasm. It carries out the reaction CMP + ATP = CDP + ADP. The enzyme catalyses dCMP + ATP = dCDP + ADP. The sequence is that of Cytidylate kinase from Streptomyces avermitilis (strain ATCC 31267 / DSM 46492 / JCM 5070 / NBRC 14893 / NCIMB 12804 / NRRL 8165 / MA-4680).